The sequence spans 341 residues: tRNA N6-adenosine threonylcarbamoyltransferase (341 aa).

Fe cation is bound by residues histidine 111 and histidine 115. Residues 134 to 138, aspartate 167, glycine 180, and asparagine 276 each bind substrate; that span reads LVSGG. Aspartate 304 lines the Fe cation pocket.

The protein belongs to the KAE1 / TsaD family. Fe(2+) is required as a cofactor.

The protein resides in the cytoplasm. It catalyses the reaction L-threonylcarbamoyladenylate + adenosine(37) in tRNA = N(6)-L-threonylcarbamoyladenosine(37) in tRNA + AMP + H(+). Its function is as follows. Required for the formation of a threonylcarbamoyl group on adenosine at position 37 (t(6)A37) in tRNAs that read codons beginning with adenine. Is involved in the transfer of the threonylcarbamoyl moiety of threonylcarbamoyl-AMP (TC-AMP) to the N6 group of A37, together with TsaE and TsaB. TsaD likely plays a direct catalytic role in this reaction. In Azotobacter vinelandii (strain DJ / ATCC BAA-1303), this protein is tRNA N6-adenosine threonylcarbamoyltransferase.